Reading from the N-terminus, the 80-residue chain is Clavaspirin (80 aa).

Residues 1-17 (MKTIILILLILGLGIDA) form the signal peptide. A propeptide spanning residues 18–29 (KSLEESKADEEK) is cleaved from the precursor. Leucine 52 is subject to Leucine amide. Residues 53 to 80 (GDDQQDNGKFYGYYAEDNGKHWYDTGDQ) constitute a propeptide that is removed on maturation.

Pharyngeal tissues and hemocytes.

It is found in the secreted. Exhibits broad-spectrum antimicrobial activity against both Gram-positive and Gram-negative bacteria. Has potent hemolytic activity. In Styela clava (Sea squirt), this protein is Clavaspirin.